Reading from the N-terminus, the 520-residue chain is Versicolorin B desaturase (520 aa).

The helical transmembrane segment at 22 to 42 (IFTTILSIFGIALSAVAAWGI) threads the bilayer. N-linked (GlcNAc...) asparagine glycans are attached at residues Asn266 and Asn426. Residue Cys462 participates in heme binding.

It belongs to the cytochrome P450 family. Heme serves as cofactor.

It is found in the membrane. The enzyme catalyses versicolorin B + NADPH + O2 + H(+) = versicolorin A + NADP(+) + 2 H2O. Its pathway is mycotoxin biosynthesis. Versicolorin B desaturase; part of the fragmented gene cluster that mediates the biosynthesis of dothistromin (DOTH), a polyketide toxin very similar in structure to the aflatoxin precursor, versicolorin B. The first step of the pathway is the conversion of acetate to norsolorinic acid (NOR) and requires the fatty acid synthase subunits hexA and hexB, as well as the polyketide synthase pksA. PksA combines a hexanoyl starter unit and 7 malonyl-CoA extender units to synthesize the precursor NOR. The hexanoyl starter unit is provided to the acyl-carrier protein (ACP) domain by the fungal fatty acid synthase hexA/hexB. The second step is the conversion of NOR to averantin (AVN) and requires the norsolorinic acid ketoreductase nor1, which catalyzes the dehydration of norsolorinic acid to form (1'S)-averantin. The cytochrome P450 monooxygenase avnA then catalyzes the hydroxylation of AVN to 5'hydroxyaverantin (HAVN). The next step is performed by adhA that transforms HAVN to averufin (AVF). Averufin might then be converted to hydroxyversicolorone by cypX and avfA. Hydroxyversicolorone is further converted versiconal hemiacetal acetate (VHA) by moxY. VHA is then the substrate for the versiconal hemiacetal acetate esterase est1 to yield versiconal (VAL). Versicolorin B synthase vbsA then converts VAL to versicolorin B (VERB) by closing the bisfuran ring. Then, the activity of the versicolorin B desaturase verB leads to versicolorin A (VERA). DotB, a predicted chloroperoxidase, may perform epoxidation of the A-ring of VERA. Alternatively, a cytochrome P450, such as cypX or avnA could catalyze this step. It is also possible that another, uncharacterized, cytochrome P450 enzyme is responsible for this step. Opening of the epoxide could potentially be achieved by the epoxide hydrolase epoA. However, epoA seems not to be required for DOTH biosynthesis, but other epoxide hydrolases may have the ability to complement this hydrolysis. Alternatively, opening of the epoxide ring could be achieved non-enzymatically. The next step is the deoxygenation of ring A to yield the 5,8-dihydroxyanthraquinone which is most likely catalyzed by the NADPH dehydrogenase encoded by ver1. The last stages of DOTH biosynthesis are proposed to involve hydroxylation of the bisfuran. OrdB and norB might have oxidative roles here. An alternative possibility is that cytochrome P450 monoogenases such as avnA and cypX might perform these steps in addition to previously proposed steps. The sequence is that of Versicolorin B desaturase from Dothistroma septosporum (strain NZE10 / CBS 128990) (Red band needle blight fungus).